The following is a 251-amino-acid chain: Hydroxyacylglutathione hydrolase (251 aa).

7 residues coordinate Zn(2+): His-53, His-55, Asp-57, His-58, His-110, Asp-127, and His-165.

The protein belongs to the metallo-beta-lactamase superfamily. Glyoxalase II family. In terms of assembly, monomer. The cofactor is Zn(2+).

The enzyme catalyses an S-(2-hydroxyacyl)glutathione + H2O = a 2-hydroxy carboxylate + glutathione + H(+). The protein operates within secondary metabolite metabolism; methylglyoxal degradation; (R)-lactate from methylglyoxal: step 2/2. In terms of biological role, thiolesterase that catalyzes the hydrolysis of S-D-lactoyl-glutathione to form glutathione and D-lactic acid. In Escherichia coli O6:H1 (strain CFT073 / ATCC 700928 / UPEC), this protein is Hydroxyacylglutathione hydrolase.